Here is a 236-residue protein sequence, read N- to C-terminus: Mediator of RNA polymerase II transcription subunit 20 (236 aa).

It belongs to the Mediator complex subunit 20 family. In terms of assembly, component of the Mediator complex.

The protein localises to the nucleus. Functionally, component of the Mediator complex, a coactivator involved in the regulated transcription of nearly all RNA polymerase II-dependent genes. Mediator functions as a bridge to convey information from gene-specific regulatory proteins to the basal RNA polymerase II transcription machinery. Mediator is recruited to promoters by direct interactions with regulatory proteins and serves as a scaffold for the assembly of a functional preinitiation complex with RNA polymerase II and the general transcription factors. This chain is Mediator of RNA polymerase II transcription subunit 20 (SRB2), found in Debaryomyces hansenii (strain ATCC 36239 / CBS 767 / BCRC 21394 / JCM 1990 / NBRC 0083 / IGC 2968) (Yeast).